Consider the following 158-residue polypeptide: NADH-quinone oxidoreductase subunit B 1 (158 aa).

Cys37, Cys38, Cys102, and Cys132 together coordinate [4Fe-4S] cluster.

This sequence belongs to the complex I 20 kDa subunit family. NDH-1 is composed of 14 different subunits. Subunits NuoB, C, D, E, F, and G constitute the peripheral sector of the complex. Requires [4Fe-4S] cluster as cofactor.

It is found in the cell inner membrane. The enzyme catalyses a quinone + NADH + 5 H(+)(in) = a quinol + NAD(+) + 4 H(+)(out). NDH-1 shuttles electrons from NADH, via FMN and iron-sulfur (Fe-S) centers, to quinones in the respiratory chain. Couples the redox reaction to proton translocation (for every two electrons transferred, four hydrogen ions are translocated across the cytoplasmic membrane), and thus conserves the redox energy in a proton gradient. This chain is NADH-quinone oxidoreductase subunit B 1, found in Chromobacterium violaceum (strain ATCC 12472 / DSM 30191 / JCM 1249 / CCUG 213 / NBRC 12614 / NCIMB 9131 / NCTC 9757 / MK).